The sequence spans 145 residues: Maximins 5/H4 type 1 (145 aa).

The first 18 residues, 1–18 (MNFKYIVAVSFLIASAYA), serve as a signal peptide directing secretion. Propeptides lie at residues 19-43 (RSVQ…REIR) and 74-124 (TAEE…KEKR). L144 bears the Leucine amide mark.

The protein belongs to the bombinin family. As to expression, expressed by the skin glands.

Its subcellular location is the secreted. Its function is as follows. Maximin-5 shows antibacterial activity against both Gram-positive and Gram-negative bacteria. The only exception is the resistance of E.coli. Also shows antimicrobial activity against fungi C.albicans, A.flavus and P.uticale. It has little hemolytic activity. It does not possess a significant cytotoxicity against tumor cell lines. It does not possess a significant anti-HIV activity. In terms of biological role, maximin-H4 shows antibacterial activity against both Gram-positive and Gram-negative bacteria. It also shows antimicrobial activity against the fungus C.albicans. Shows strong hemolytic activity. This Bombina maxima (Giant fire-bellied toad) protein is Maximins 5/H4 type 1.